The following is a 273-amino-acid chain: Peptidoglycan-N-acetylglucosamine deacetylase BC_1974 (273 aa).

A helical transmembrane segment spans residues isoleucine 10–isoleucine 30. In terms of domain architecture, NodB homology spans lysine 69–glutamate 255. Aspartate 76 (proton acceptor) is an active-site residue. Aspartate 77, histidine 126, and histidine 130 together coordinate Zn(2+). Histidine 230 (proton donor) is an active-site residue.

This sequence belongs to the polysaccharide deacetylase family. The cofactor is Zn(2+). It depends on Co(2+) as a cofactor. Ni(2+) serves as cofactor.

It localises to the cell membrane. The catalysed reaction is peptidoglycan-N-acetyl-D-glucosamine + H2O = peptidoglycan-D-glucosamine + acetate.. Inhibited by the hydroxamate N-hydroxy-4-(naphthalene-1-yl)benzamide (NHNB). Functionally, catalyzes the deacetylation of N-acetylglucosamine (GlcNAc) residues in peptidoglycan. This chain is Peptidoglycan-N-acetylglucosamine deacetylase BC_1974, found in Bacillus cereus (strain ATCC 14579 / DSM 31 / CCUG 7414 / JCM 2152 / NBRC 15305 / NCIMB 9373 / NCTC 2599 / NRRL B-3711).